The chain runs to 303 residues: Putative S-adenosyl-L-methionine-dependent methyltransferase MAB_0213c (303 aa).

S-adenosyl-L-methionine contacts are provided by residues Asp-126 and 155–156; that span reads DL.

This sequence belongs to the UPF0677 family.

Its function is as follows. Exhibits S-adenosyl-L-methionine-dependent methyltransferase activity. This is Putative S-adenosyl-L-methionine-dependent methyltransferase MAB_0213c from Mycobacteroides abscessus (strain ATCC 19977 / DSM 44196 / CCUG 20993 / CIP 104536 / JCM 13569 / NCTC 13031 / TMC 1543 / L948) (Mycobacterium abscessus).